The chain runs to 91 residues: Large ribosomal subunit protein uL23c (91 aa).

The protein belongs to the universal ribosomal protein uL23 family. Part of the 50S ribosomal subunit.

The protein resides in the plastid. It localises to the chloroplast. In terms of biological role, binds to 23S rRNA. This is Large ribosomal subunit protein uL23c (rpl23) from Chaetosphaeridium globosum (Charophycean green alga).